We begin with the raw amino-acid sequence, 157 residues long: Small ribosomal subunit protein uS7 (157 aa).

Belongs to the universal ribosomal protein uS7 family. Part of the 30S ribosomal subunit. Contacts proteins S9 and S11.

In terms of biological role, one of the primary rRNA binding proteins, it binds directly to 16S rRNA where it nucleates assembly of the head domain of the 30S subunit. Is located at the subunit interface close to the decoding center, probably blocks exit of the E-site tRNA. The polypeptide is Small ribosomal subunit protein uS7 (Chlamydia felis (strain Fe/C-56) (Chlamydophila felis)).